The sequence spans 334 residues: Magnesium-chelatase 38 kDa subunit (334 aa).

36 to 43 (GDRGTGKS) serves as a coordination point for ATP.

It belongs to the Mg-chelatase subunits D/I family.

It catalyses the reaction protoporphyrin IX + Mg(2+) + ATP + H2O = Mg-protoporphyrin IX + ADP + phosphate + 3 H(+). Its pathway is porphyrin-containing compound metabolism; bacteriochlorophyll biosynthesis. Its function is as follows. Involved in bacteriochlorophyll biosynthesis; introduces a magnesium ion into protoporphyrin IX to yield Mg-protoporphyrin IX. This is Magnesium-chelatase 38 kDa subunit (bchI) from Cereibacter sphaeroides (strain ATCC 17023 / DSM 158 / JCM 6121 / CCUG 31486 / LMG 2827 / NBRC 12203 / NCIMB 8253 / ATH 2.4.1.) (Rhodobacter sphaeroides).